Here is a 415-residue protein sequence, read N- to C-terminus: Light-independent protochlorophyllide reductase subunit N (415 aa).

[4Fe-4S] cluster-binding residues include Cys-16, Cys-41, and Cys-98.

The protein belongs to the BchN/ChlN family. As to quaternary structure, protochlorophyllide reductase is composed of three subunits; BchL, BchN and BchB. Forms a heterotetramer of two BchB and two BchN subunits. The cofactor is [4Fe-4S] cluster.

It catalyses the reaction chlorophyllide a + oxidized 2[4Fe-4S]-[ferredoxin] + 2 ADP + 2 phosphate = protochlorophyllide a + reduced 2[4Fe-4S]-[ferredoxin] + 2 ATP + 2 H2O. Its pathway is porphyrin-containing compound metabolism; bacteriochlorophyll biosynthesis (light-independent). Component of the dark-operative protochlorophyllide reductase (DPOR) that uses Mg-ATP and reduced ferredoxin to reduce ring D of protochlorophyllide (Pchlide) to form chlorophyllide a (Chlide). This reaction is light-independent. The NB-protein (BchN-BchB) is the catalytic component of the complex. The protein is Light-independent protochlorophyllide reductase subunit N of Roseiflexus sp. (strain RS-1).